The sequence spans 161 residues: Ragulator complex protein LAMTOR1 (161 aa).

The segment at 1-43 is disordered; that stretch reads MGCCYSSENEDSDQDREERKLLLDPSSTPTKALNGAEPNYHSL. A lipid anchor (N-myristoyl glycine) is attached at glycine 2. Residues cysteine 3 and cysteine 4 are each lipidated (S-palmitoyl cysteine). Residue lysine 20 forms a Glycyl lysine isopeptide (Lys-Gly) (interchain with G-Cter in ubiquitin) linkage. Phosphoserine is present on serine 27. Threonine 28 carries the phosphothreonine modification. Lysine 31 participates in a covalent cross-link: Glycyl lysine isopeptide (Lys-Gly) (interchain with G-Cter in ubiquitin). Serine 42 and serine 56 each carry phosphoserine. Lysine 60 is covalently cross-linked (Glycyl lysine isopeptide (Lys-Gly) (interchain with G-Cter in ubiquitin)). The residue at position 98 (serine 98) is a Phosphoserine. Residues lysine 103 and lysine 104 each participate in a glycyl lysine isopeptide (Lys-Gly) (interchain with G-Cter in ubiquitin) cross-link. The interval 121-161 is interaction with LAMTOR2 and LAMTOR3; sequence SEPIPFSDLQQVSRIAAYAYSALSQIRVDAKEELVVQFGIP. Serine 141 bears the Phosphoserine mark.

It belongs to the LAMTOR1 family. In terms of assembly, part of the Ragulator complex composed of LAMTOR1, LAMTOR2, LAMTOR3, LAMTOR4 and LAMTOR5. LAMTOR4 and LAMTOR5 form a heterodimer that interacts, through LAMTOR1, with a LAMTOR2, LAMTOR3 heterodimer. Interacts with LAMTOR2 and LAMTOR3; the interaction is direct. The Ragulator complex interacts with both the mTORC1 complex and heterodimers constituted of the Rag GTPases RagA/RRAGA, RagB/RRAGB, RagC/RRAGC and RagD/RRAGD; regulated by amino acid availability. The Ragulator complex interacts with SLC38A9; the probable amino acid sensor. Component of the lysosomal folliculin complex (LFC), composed of FLCN, FNIP1 (or FNIP2), RagA/RRAGA or RagB/RRAGB GDP-bound, RagC/RRAGC or RagD/RRAGD GTP-bound, and Ragulator. Associates with the lysosomal V-ATPase complex; interaction promotes the guanine nucleotide exchange factor (GEF) of the Ragulator complex. Interacts with MMP14. Interacts with CDKN1B; prevents the interaction of CDKN1B with RHOA leaving RHOA in a form accessible to activation by ARHGEF2. Interacts with PIP4P1. Post-translationally, N-terminal myristoylation and palmitoylation mediates its recruitment to lysosome membranes, thereby promoting localization of the Ragulator complex to lysosomes. N-myristoylation by NMT1 is required for palmitoylation at Cys-3 and Cys-4. Ubiquitinated at Lys-60, Lys-103 and Lys-104 by UBE3A in neurons, promoting its degradation by the proteasome, thereby limiting mTORC1 signaling and activity-dependent synaptic remodeling. Ubiquitination at Lys-20 impairs the association with the lysosomal V-ATPase complex. Deubiquitination at Lys-20 by USP32 promotes the association with the lysosomal V-ATPase complex and subsequent activation of the mTORC1 complex.

The protein localises to the lysosome membrane. The protein resides in the late endosome membrane. Functionally, key component of the Ragulator complex, a multiprotein complex involved in amino acid sensing and activation of mTORC1, a signaling complex promoting cell growth in response to growth factors, energy levels, and amino acids. Activated by amino acids through a mechanism involving the lysosomal V-ATPase, the Ragulator plays a dual role for the small GTPases Rag (RagA/RRAGA, RagB/RRAGB, RagC/RRAGC and/or RagD/RRAGD): it (1) acts as a guanine nucleotide exchange factor (GEF), activating the small GTPases Rag and (2) mediates recruitment of Rag GTPases to the lysosome membrane. Activated Ragulator and Rag GTPases function as a scaffold recruiting mTORC1 to lysosomes where it is in turn activated. LAMTOR1 is directly responsible for anchoring the Ragulator complex to the lysosomal membrane. LAMTOR1 wraps around the other subunits of the Ragulator complex to hold them in place and interacts with the Rag GTPases, thereby playing a key role in the recruitment of the mTORC1 complex to lysosomes. Also involved in the control of embryonic stem cells differentiation via non-canonical RagC/RRAGC and RagD/RRAGD activation: together with FLCN, it is necessary to recruit and activate RagC/RRAGC and RagD/RRAGD at the lysosomes, and to induce exit of embryonic stem cells from pluripotency via non-canonical, mTOR-independent TFE3 inactivation. Also required for late endosomes/lysosomes biogenesis it may regulate both the recycling of receptors through endosomes and the MAPK signaling pathway through recruitment of some of its components to late endosomes. May be involved in cholesterol homeostasis regulating LDL uptake and cholesterol release from late endosomes/lysosomes. May also play a role in RHOA activation. The polypeptide is Ragulator complex protein LAMTOR1 (Mus musculus (Mouse)).